The primary structure comprises 249 residues: Cytoplasmic envelopment protein 1 (249 aa).

This sequence belongs to the herpesviridae cytoplasmic envelopment protein 1 family.

It localises to the virion. The protein resides in the virion tegument. The protein localises to the host cytoplasm. Its subcellular location is the host Golgi apparatus. Plays a critical role in cytoplasmic virus egress. Participates in the final step of tegumentation and envelope acquisition within the host cytoplasm. This Homo sapiens (Human) protein is Cytoplasmic envelopment protein 1 (UL103).